Here is a 1407-residue protein sequence, read N- to C-terminus: Clustered mitochondria protein (1407 aa).

Over residues 1-12 (MAGKSNKSKAKR) the composition is skewed to basic residues. Disordered stretches follow at residues 1 to 36 (MAGK…PVAA) and 83 to 103 (IPKA…PKQG). The span at 14-24 (AQSTTTNSTTD) shows a compositional bias: polar residues. In terms of domain architecture, Clu spans 384 to 670 (PDHKRDAARA…RVTPRDANYT (287 aa)). Residues 724–760 (IDGEANGASNSDQKSISDKQNTTAEDYAAGSSESSKS) are disordered. Polar residues predominate over residues 730-747 (GASNSDQKSISDKQNTTA). 5 TPR repeats span residues 1025–1058 (AKDL…LQQV), 1067–1100 (ANCC…NERC), 1109–1142 (AHSY…LGLS), 1151–1184 (AATF…NERL), and 1193–1226 (AVCY…LVKQ). A disordered region spans residues 1358–1407 (VSSEKGGENGEAKVQEKKESSENGKTENLAPAGLGAGLTSLDKKKQKAKK). Over residues 1362-1382 (KGGENGEAKVQEKKESSENGK) the composition is skewed to basic and acidic residues.

It belongs to the CLU family.

The protein localises to the cytoplasm. Its function is as follows. mRNA-binding protein involved in proper cytoplasmic distribution of mitochondria. Together with REC2, REC3 and FMT/CLU, contributes to the establishment of the cellular volume devoted to the chloroplast compartment. The sequence is that of Clustered mitochondria protein from Arabidopsis thaliana (Mouse-ear cress).